The following is an 85-amino-acid chain: Protein MC005 (85 aa).

As to quaternary structure, interacts with host IKBKG; this interaction prevents NF-kappa-B activation.

The protein resides in the host cytoplasm. Functionally, plays a role in the inhibition of the host NF-kappa-B pathway by preventing ubiquitin binding-dependent regulation of host IKBKB activation by IKBKG/NEMO. The polypeptide is Protein MC005 (MC005L) (Molluscum contagiosum virus subtype 1 (MOCV)).